Consider the following 457-residue polypeptide: Bifunctional protein GlmU (457 aa).

The pyrophosphorylase stretch occupies residues 1-230; it reads MLNVVILAAG…SWETLGVNSR (230 aa). UDP-N-acetyl-alpha-D-glucosamine-binding positions include 7-10, Lys-21, Gln-73, 78-79, 104-106, Gly-140, Glu-155, Asn-170, and Asn-228; these read LAAG, GT, and YGD. Asp-106 provides a ligand contact to Mg(2+). Asn-228 is a Mg(2+) binding site. The segment at 231-251 is linker; the sequence is VQQAQLERAWQSELARRQLEA. The tract at residues 252–457 is N-acetyltransferase; that stretch reads GVTLADPARF…EGWKRPVKKS (206 aa). Positions 334 and 352 each coordinate UDP-N-acetyl-alpha-D-glucosamine. His-364 serves as the catalytic Proton acceptor. UDP-N-acetyl-alpha-D-glucosamine contacts are provided by Tyr-367 and Asn-378. Residues Ala-381, 387–388, Ser-406, Ala-424, and Arg-441 each bind acetyl-CoA; that span reads NY.

This sequence in the N-terminal section; belongs to the N-acetylglucosamine-1-phosphate uridyltransferase family. It in the C-terminal section; belongs to the transferase hexapeptide repeat family. As to quaternary structure, homotrimer. Mg(2+) serves as cofactor.

The protein resides in the cytoplasm. It carries out the reaction alpha-D-glucosamine 1-phosphate + acetyl-CoA = N-acetyl-alpha-D-glucosamine 1-phosphate + CoA + H(+). The catalysed reaction is N-acetyl-alpha-D-glucosamine 1-phosphate + UTP + H(+) = UDP-N-acetyl-alpha-D-glucosamine + diphosphate. It participates in nucleotide-sugar biosynthesis; UDP-N-acetyl-alpha-D-glucosamine biosynthesis; N-acetyl-alpha-D-glucosamine 1-phosphate from alpha-D-glucosamine 6-phosphate (route II): step 2/2. The protein operates within nucleotide-sugar biosynthesis; UDP-N-acetyl-alpha-D-glucosamine biosynthesis; UDP-N-acetyl-alpha-D-glucosamine from N-acetyl-alpha-D-glucosamine 1-phosphate: step 1/1. It functions in the pathway bacterial outer membrane biogenesis; LPS lipid A biosynthesis. Its function is as follows. Catalyzes the last two sequential reactions in the de novo biosynthetic pathway for UDP-N-acetylglucosamine (UDP-GlcNAc). The C-terminal domain catalyzes the transfer of acetyl group from acetyl coenzyme A to glucosamine-1-phosphate (GlcN-1-P) to produce N-acetylglucosamine-1-phosphate (GlcNAc-1-P), which is converted into UDP-GlcNAc by the transfer of uridine 5-monophosphate (from uridine 5-triphosphate), a reaction catalyzed by the N-terminal domain. The polypeptide is Bifunctional protein GlmU (Bordetella bronchiseptica (strain ATCC BAA-588 / NCTC 13252 / RB50) (Alcaligenes bronchisepticus)).